Consider the following 428-residue polypeptide: Serine--tRNA ligase (428 aa).

Thr-231–Glu-233 serves as a coordination point for L-serine. Arg-262–Glu-264 serves as a coordination point for ATP. Residue Glu-285 coordinates L-serine. Residue Glu-349–Ser-352 coordinates ATP. Ser-385 contributes to the L-serine binding site.

The protein belongs to the class-II aminoacyl-tRNA synthetase family. Type-1 seryl-tRNA synthetase subfamily. Homodimer. The tRNA molecule binds across the dimer.

The protein localises to the cytoplasm. The enzyme catalyses tRNA(Ser) + L-serine + ATP = L-seryl-tRNA(Ser) + AMP + diphosphate + H(+). It catalyses the reaction tRNA(Sec) + L-serine + ATP = L-seryl-tRNA(Sec) + AMP + diphosphate + H(+). The protein operates within aminoacyl-tRNA biosynthesis; selenocysteinyl-tRNA(Sec) biosynthesis; L-seryl-tRNA(Sec) from L-serine and tRNA(Sec): step 1/1. In terms of biological role, catalyzes the attachment of serine to tRNA(Ser). Is also able to aminoacylate tRNA(Sec) with serine, to form the misacylated tRNA L-seryl-tRNA(Sec), which will be further converted into selenocysteinyl-tRNA(Sec). The protein is Serine--tRNA ligase of Staphylococcus carnosus (strain TM300).